The chain runs to 366 residues: Chorismate synthase (366 aa).

Arginine 48 and arginine 54 together coordinate NADP(+). Residues 125–127 (RSS), 242–243 (NA), glycine 287, 302–306 (KPTSS), and arginine 328 contribute to the FMN site.

It belongs to the chorismate synthase family. As to quaternary structure, homotetramer. It depends on FMNH2 as a cofactor.

The enzyme catalyses 5-O-(1-carboxyvinyl)-3-phosphoshikimate = chorismate + phosphate. It functions in the pathway metabolic intermediate biosynthesis; chorismate biosynthesis; chorismate from D-erythrose 4-phosphate and phosphoenolpyruvate: step 7/7. In terms of biological role, catalyzes the anti-1,4-elimination of the C-3 phosphate and the C-6 proR hydrogen from 5-enolpyruvylshikimate-3-phosphate (EPSP) to yield chorismate, which is the branch point compound that serves as the starting substrate for the three terminal pathways of aromatic amino acid biosynthesis. This reaction introduces a second double bond into the aromatic ring system. This chain is Chorismate synthase, found in Rhodospirillum rubrum (strain ATCC 11170 / ATH 1.1.1 / DSM 467 / LMG 4362 / NCIMB 8255 / S1).